Reading from the N-terminus, the 220-residue chain is Probable nicotinate-nucleotide adenylyltransferase (220 aa).

It belongs to the NadD family.

It catalyses the reaction nicotinate beta-D-ribonucleotide + ATP + H(+) = deamido-NAD(+) + diphosphate. Its pathway is cofactor biosynthesis; NAD(+) biosynthesis; deamido-NAD(+) from nicotinate D-ribonucleotide: step 1/1. Functionally, catalyzes the reversible adenylation of nicotinate mononucleotide (NaMN) to nicotinic acid adenine dinucleotide (NaAD). This chain is Probable nicotinate-nucleotide adenylyltransferase, found in Yersinia enterocolitica serotype O:8 / biotype 1B (strain NCTC 13174 / 8081).